Reading from the N-terminus, the 542-residue chain is MAAKDVKFAGDAREKMLRGVDILANAVKVTLGPKGRNVVIEKSFGAPRITKDGVSVAKEIELEDKFENLGAQLVREVASKTNDLAGDGTTTATVLAQAIVKEGSKAVAAGMNPMDLKRGIDLAVDAIVKDLAAKAKKVTSNAEIAQVGTISANGDADVGKFLAEAMQKVGNEGVITVEEAKTAETELEVVEGMQFDRGYLSPYFVTNAEKMRVEFEDPYILIHEKKLSNLQELLPVLEAVVQSGKPLVIVAEDVEGEALATLVVNKLRGGLKVAAVKAPGFGDRRKAMLQDIAILTGGQAISEDLGIKLENVNLSMLGRAKKVVIEKENTTIVDGNGEKADIEARVAQIKAQIEETTSDYDREKLQERLAKLAGGVAVIRVGGATEVEVKEKKDRVDDALHATRAAVEEGIVPGGGVALLRAIKVLEGLKVENTDQKTGIDIVRRAIQAPARQIVANAGDDGSVVVGKILENETYTFGYNAQTGEYVDMVASGIIDPAKVVRTALQDAASISALIITTEALVVELPKKAAAAPAMPGGGMDF.

Residues 30-33 (TLGP), Lys-51, 87-91 (DGTTT), Gly-415, and Asp-496 contribute to the ATP site.

This sequence belongs to the chaperonin (HSP60) family. Forms a cylinder of 14 subunits composed of two heptameric rings stacked back-to-back. Interacts with the co-chaperonin GroES.

The protein localises to the cytoplasm. The enzyme catalyses ATP + H2O + a folded polypeptide = ADP + phosphate + an unfolded polypeptide.. In terms of biological role, together with its co-chaperonin GroES, plays an essential role in assisting protein folding. The GroEL-GroES system forms a nano-cage that allows encapsulation of the non-native substrate proteins and provides a physical environment optimized to promote and accelerate protein folding. The protein is Chaperonin GroEL 2 of Azorhizobium caulinodans (strain ATCC 43989 / DSM 5975 / JCM 20966 / LMG 6465 / NBRC 14845 / NCIMB 13405 / ORS 571).